Consider the following 397-residue polypeptide: RNA binding protein fox-1 homolog 1 (397 aa).

A disordered region spans residues 1–121 (MNCEREQLRG…NKSQPKRLHV (121 aa)). A compositionally biased stretch (polar residues) spans 70–87 (QTHSEQSPADTSAQTVSG). Residues 88–99 (TATQTDDAAPTD) are compositionally biased toward low complexity. Polar residues predominate over residues 100–113 (GQPQTQPSENTENK). The 77-residue stretch at 117–193 (KRLHVSNIPF…RKIEVNNATA (77 aa)) folds into the RRM domain. Position 317 is an asymmetric dimethylarginine (arginine 317). The residue at position 388 (arginine 388) is an Omega-N-methylarginine.

As to quaternary structure, binds to the C-terminus of ATXN2. Predominantly expressed in muscle and brain.

Its subcellular location is the nucleus. The protein resides in the cytoplasm. Functionally, RNA-binding protein that regulates alternative splicing events by binding to 5'-UGCAUGU-3' elements. Regulates alternative splicing of tissue-specific exons and of differentially spliced exons during erythropoiesis. This chain is RNA binding protein fox-1 homolog 1 (RBFOX1), found in Homo sapiens (Human).